A 409-amino-acid polypeptide reads, in one-letter code: Glycosaminoglycan xylosylkinase (409 aa).

At 1–6 the chain is on the cytoplasmic side; the sequence is MKLKQR. The chain crosses the membrane as a helical; Signal-anchor for type II membrane protein span at residues 7-25; that stretch reads VVVLCAVLFLLGLAKVFLL. Topologically, residues 26 to 409 are lumenal; the sequence is DGGEGSAASR…IEDRMNLPHP (384 aa). ATP is bound by residues Gln107 and Lys123. A Mn(2+)-binding site is contributed by Asp142. The N-linked (GlcNAc...) asparagine glycan is linked to Asn193. Intrachain disulfides connect Cys196-Cys211 and Cys201-Cys204. An ATP-binding site is contributed by 222–225; sequence TLWL. 2 cysteine pairs are disulfide-bonded: Cys257-Cys331 and Cys332-Cys389. The active site involves Asp289. Residues Glu294 and Asp309 each contribute to the ATP site. Residue Asp309 coordinates Mn(2+).

This sequence belongs to the FAM20 family. Requires Mn(2+) as cofactor.

The protein localises to the golgi apparatus membrane. The enzyme catalyses 3-O-(beta-D-galactosyl-(1-&gt;3)-beta-D-galactosyl-(1-&gt;4)-beta-D-xylosyl)-L-seryl-[protein] + ATP = 3-O-(beta-D-galactosyl-(1-&gt;3)-beta-D-galactosyl-(1-&gt;4)-beta-D-2-O-phosphoxylosyl)-L-seryl-[protein] + ADP + H(+). Responsible for the 2-O-phosphorylation of xylose in the glycosaminoglycan-protein linkage region of proteoglycans thereby regulating the amount of mature GAG chains. Sulfated glycosaminoglycans (GAGs), including heparan sulfate and chondroitin sulfate, are synthesized on the so-called common GAG-protein linkage region (GlcUAbeta1-3Galbeta1-3Galbeta1-4Xylbeta1-O-Ser) of core proteins, which is formed by the stepwise addition of monosaccharide residues by the respective specific glycosyltransferases. The chain is Glycosaminoglycan xylosylkinase from Danio rerio (Zebrafish).